Here is a 473-residue protein sequence, read N- to C-terminus: MNINMKDNFKKWLDLQQKKTLLKFLTCGSVDDGKSTLIGRLLHDTKQIYDDQLFFLKSDSKRHGTQGNEIDLALVVDGLQSEREQGITIDVAYRYFSTNKRKFIIADTPGHEQYTRNMATGASTCDLSILLVDARKGLSEQTYRHSFISTLLGIKYLIVAINKMDLVNYKQEIFENIKKDFLIFSKKLANDLNIIFIPMSALLGENIVFKTKLMPWYQGVTLLSFLETIKIKNSISSEELRFPVQYINRPNSDFRGYSGILLSGRMHVGQTIKILPENINSRVSRIVTFDKELKKAEIGESITVVLKDEIDINRGDFFVNIDSILQPSQEAIIDIVWMTDNILLAGESYNVKLSGKKIRVYIKEILFRLDVNTLKKVKSHSLVLNSIGRVKIYFSKPVIFDNYSENRMTGNMIFIDLLTNITVGAGMIVNSLDKKGKIPSNKQKDFESDFYDLIIRHFPHWNIPKILMKKVYK.

In terms of domain architecture, tr-type G spans 19–238 (KTLLKFLTCG…IKIKNSISSE (220 aa)). The interval 28-35 (GSVDDGKS) is G1. 28–35 (GSVDDGKS) contacts GTP. The segment at 86 to 90 (GITID) is G2. The tract at residues 107 to 110 (DTPG) is G3. Residues 107–111 (DTPGH) and 162–165 (NKMD) each bind GTP. The interval 162–165 (NKMD) is G4. The interval 200-202 (SAL) is G5.

Belongs to the TRAFAC class translation factor GTPase superfamily. Classic translation factor GTPase family. CysN/NodQ subfamily. Heterodimer composed of CysD, the smaller subunit, and CysN.

The enzyme catalyses sulfate + ATP + H(+) = adenosine 5'-phosphosulfate + diphosphate. The protein operates within sulfur metabolism; hydrogen sulfide biosynthesis; sulfite from sulfate: step 1/3. In terms of biological role, with CysD forms the ATP sulfurylase (ATPS) that catalyzes the adenylation of sulfate producing adenosine 5'-phosphosulfate (APS) and diphosphate, the first enzymatic step in sulfur assimilation pathway. APS synthesis involves the formation of a high-energy phosphoric-sulfuric acid anhydride bond driven by GTP hydrolysis by CysN coupled to ATP hydrolysis by CysD. This chain is Sulfate adenylyltransferase subunit 1, found in Buchnera aphidicola subsp. Acyrthosiphon pisum (strain Tuc7).